The sequence spans 430 residues: 4-hydroxy-3-methylbut-2-en-1-yl diphosphate synthase (flavodoxin) (430 aa).

Cysteine 310, cysteine 313, cysteine 356, and glutamate 363 together coordinate [4Fe-4S] cluster.

The protein belongs to the IspG family. Requires [4Fe-4S] cluster as cofactor.

It catalyses the reaction (2E)-4-hydroxy-3-methylbut-2-enyl diphosphate + oxidized [flavodoxin] + H2O + 2 H(+) = 2-C-methyl-D-erythritol 2,4-cyclic diphosphate + reduced [flavodoxin]. It functions in the pathway isoprenoid biosynthesis; isopentenyl diphosphate biosynthesis via DXP pathway; isopentenyl diphosphate from 1-deoxy-D-xylulose 5-phosphate: step 5/6. Functionally, converts 2C-methyl-D-erythritol 2,4-cyclodiphosphate (ME-2,4cPP) into 1-hydroxy-2-methyl-2-(E)-butenyl 4-diphosphate. The sequence is that of 4-hydroxy-3-methylbut-2-en-1-yl diphosphate synthase (flavodoxin) from Nitrobacter winogradskyi (strain ATCC 25391 / DSM 10237 / CIP 104748 / NCIMB 11846 / Nb-255).